A 621-amino-acid chain; its full sequence is Putative 5'-3' exonuclease R528 (621 aa).

This sequence belongs to the 5'-3' exonuclease family.

The protein resides in the virion. This is Putative 5'-3' exonuclease R528 from Acanthamoeba polyphaga mimivirus (APMV).